Consider the following 343-residue polypeptide: 4-hydroxy-2-oxovalerate aldolase 1 (343 aa).

In terms of domain architecture, Pyruvate carboxyltransferase spans 8-260 (ITVHDMSLRD…ETGVDVFAIS (253 aa)). Residue 16–17 (RD) participates in substrate binding. D17 provides a ligand contact to Mn(2+). The active-site Proton acceptor is H20. The substrate site is built by S170 and H199. Residues H199 and H201 each contribute to the Mn(2+) site. A substrate-binding site is contributed by Y290.

This sequence belongs to the 4-hydroxy-2-oxovalerate aldolase family.

The catalysed reaction is (S)-4-hydroxy-2-oxopentanoate = acetaldehyde + pyruvate. The polypeptide is 4-hydroxy-2-oxovalerate aldolase 1 (bphI) (Burkholderia cenocepacia (strain ATCC BAA-245 / DSM 16553 / LMG 16656 / NCTC 13227 / J2315 / CF5610) (Burkholderia cepacia (strain J2315))).